The primary structure comprises 231 residues: Ribosyldihydronicotinamide dehydrogenase [quinone] (231 aa).

FAD is bound by residues His-12 and 18 to 21 (FNGS). Ser-80 carries the post-translational modification Phosphoserine. 104–107 (LYWF) contributes to the FAD binding site. 127 to 129 (FDI) is a substrate binding site. FAD is bound by residues 148–151 (TTGG) and Tyr-156. Zn(2+) is bound by residues His-174 and His-178. Glu-194 lines the FAD pocket. Phosphoserine is present on Ser-197. Residue Arg-201 participates in FAD binding. A Zn(2+)-binding site is contributed by Cys-223.

It belongs to the NAD(P)H dehydrogenase (quinone) family. As to quaternary structure, homodimer. Zn(2+) serves as cofactor. Requires FAD as cofactor.

It is found in the cytoplasm. The catalysed reaction is 1-(beta-D-ribofuranosyl)-1,4-dihydronicotinamide + a quinone + H(+) = beta-nicotinamide D-riboside + a quinol. Functionally, the enzyme apparently serves as a quinone reductase in connection with conjugation reactions of hydroquinones involved in detoxification pathways as well as in biosynthetic processes such as the vitamin K-dependent gamma-carboxylation of glutamate residues in prothrombin synthesis. The chain is Ribosyldihydronicotinamide dehydrogenase [quinone] (NQO2) from Pongo abelii (Sumatran orangutan).